We begin with the raw amino-acid sequence, 216 residues long: Small ribosomal subunit protein uS5 (216 aa).

In terms of domain architecture, S5 DRBM spans 51–114; sequence LEEEVIDVNL…DDAKFNIIKV (64 aa).

It belongs to the universal ribosomal protein uS5 family. In terms of assembly, part of the 30S ribosomal subunit. Contacts protein S4.

With S4 and S12 plays an important role in translational accuracy. This Methanothermobacter thermautotrophicus (strain ATCC 29096 / DSM 1053 / JCM 10044 / NBRC 100330 / Delta H) (Methanobacterium thermoautotrophicum) protein is Small ribosomal subunit protein uS5.